The chain runs to 107 residues: U1-lycotoxin-Ls1s (107 aa).

Positions 1 to 20 are cleaved as a signal peptide; that stretch reads MMKVLVVVALLVTLISYSSS. The propeptide occupies 21–41; the sequence is EGIDDLEADELLSLMANEQTR. Disulfide bonds link Cys-44–Cys-59, Cys-51–Cys-68, Cys-58–Cys-86, and Cys-70–Cys-84.

It belongs to the neurotoxin 19 (CSTX) family. 04 (U1-Lctx) subfamily. In terms of tissue distribution, expressed by the venom gland.

The protein localises to the secreted. This is U1-lycotoxin-Ls1s from Lycosa singoriensis (Wolf spider).